The primary structure comprises 139 residues: MRFLILLLPFFLFAKEVCLDFSEIDTDDPYVKQAIIRKVEEYVLEAGFKVKCTENTLRIKVRANYREVPSTISARQRVSSYTLYLSVSLGEESFSASVPYSLPSGSLAELPRRKALEEAFSRIKLHIIKYFSREYLREK.

This is an uncharacterized protein from Aquifex aeolicus (strain VF5).